Here is a 409-residue protein sequence, read N- to C-terminus: NDP-glycosyltransferase ltbB (409 aa).

An N-linked (GlcNAc...) asparagine glycan is attached at asparagine 36. The helical transmembrane segment at 319-339 (IWAFAYVWAWLQTLYTAPWIA) threads the bilayer.

It belongs to the GT2 glycosyltransferase family.

The protein localises to the membrane. The protein operates within secondary metabolite biosynthesis. Functionally, NDP-glycosyltransferase; part of the gene cluster that mediates the biosynthesis of luteodienoside A, a glycosylated polyketide consisting of an unusual 1-O-beta-D-glucopyranosyl-myo-inositol (glucinol) ester of 3-hydroxy-2,2,4-trimethylocta-4,6-dienoic acid. LtbB likely serves as a glucinol synthase by transferring D-glucose to myo-inositol using NDP-glucose as a substrate. The ltbA carnitine O-acyltransferase (cAT) domain uses glucinol produced by the glycosyltransferase ltbB as an offloading substrate to release luteodienoside A from the HR-PKS. Since ltbA and ltbB are sufficient for the biosynthesis of luteodienoside A, the functions of the methyltransferase ltbC and the FAD-binding monooxygenase ltbD within the pathway remain obscur. This Aspergillus luteorubrus protein is NDP-glycosyltransferase ltbB.